Reading from the N-terminus, the 361-residue chain is Ribosomal RNA small subunit methyltransferase H (361 aa).

Residues 54 to 56 (GGH), D74, Y101, D122, and Q129 contribute to the S-adenosyl-L-methionine site. Positions 318–361 (ARNSRASSAKLRAAQRLAEGQAPRPRRRNKYAPEGRDEPEGGAA) are disordered. Positions 348–361 (YAPEGRDEPEGGAA) are enriched in basic and acidic residues.

It belongs to the methyltransferase superfamily. RsmH family.

It localises to the cytoplasm. It carries out the reaction cytidine(1402) in 16S rRNA + S-adenosyl-L-methionine = N(4)-methylcytidine(1402) in 16S rRNA + S-adenosyl-L-homocysteine + H(+). Its function is as follows. Specifically methylates the N4 position of cytidine in position 1402 (C1402) of 16S rRNA. In Nitratidesulfovibrio vulgaris (strain DSM 19637 / Miyazaki F) (Desulfovibrio vulgaris), this protein is Ribosomal RNA small subunit methyltransferase H.